Reading from the N-terminus, the 186-residue chain is Ribosome-recycling factor (186 aa).

The protein belongs to the RRF family.

The protein resides in the cytoplasm. Functionally, responsible for the release of ribosomes from messenger RNA at the termination of protein biosynthesis. May increase the efficiency of translation by recycling ribosomes from one round of translation to another. The sequence is that of Ribosome-recycling factor from Burkholderia mallei (strain NCTC 10247).